The following is a 263-amino-acid chain: Stress-response A/B barrel domain-containing protein UP3 (263 aa).

2 consecutive Stress-response A/B barrel domains span residues 49 to 142 (IEHI…AVDW) and 158 to 252 (VAKL…VVEF). A Peroxisomal targeting signal motif is present at residues 261-263 (SSL).

Homodimer.

Its subcellular location is the peroxisome. In terms of biological role, involved in stress response. This is Stress-response A/B barrel domain-containing protein UP3 from Arabidopsis thaliana (Mouse-ear cress).